An 88-amino-acid chain; its full sequence is Large ribosomal subunit protein bL27 (88 aa).

The segment at 1–24 (MATKKSGGSSGNGRDSRGRRLGVK) is disordered.

This sequence belongs to the bacterial ribosomal protein bL27 family.

The sequence is that of Large ribosomal subunit protein bL27 from Ehrlichia canis (strain Jake).